Consider the following 87-residue polypeptide: Small ribosomal subunit protein uS17 (87 aa).

It belongs to the universal ribosomal protein uS17 family. In terms of assembly, part of the 30S ribosomal subunit.

Its function is as follows. One of the primary rRNA binding proteins, it binds specifically to the 5'-end of 16S ribosomal RNA. This chain is Small ribosomal subunit protein uS17, found in Alcanivorax borkumensis (strain ATCC 700651 / DSM 11573 / NCIMB 13689 / SK2).